Consider the following 579-residue polypeptide: Fatty-acid amide hydrolase 1 (579 aa).

Residues 9–29 form a helical membrane-spanning segment; that stretch reads ALPGASGVALACCFVAAAVAL. At 30-403 the chain is on the cytoplasmic side; that stretch reads RWSGRRTARG…GDFVDPCLGD (374 aa). Lys-142 serves as the catalytic Charge relay system. Residues Met-191, Ser-217, and 238-241 contribute to the substrate site; that span reads IGGS. Ser-217 acts as the Charge relay system in catalysis. The active-site Acyl-ester intermediate is Ser-241. At Ser-241 the chain carries Phosphoserine. An intramembrane segment occupies 404-433; sequence LVSILKLPQWLKGLLAFLVKPLLPRLSAFL. The Cytoplasmic portion of the chain corresponds to 434-579; the sequence is SNMKSRSAGK…RLMTPEKQSS (146 aa).

It belongs to the amidase family. Homodimer. Highly expressed in the brain, small intestine, pancreas, skeletal muscle and testis. Also expressed in the kidney, liver, lung, placenta and prostate.

The protein resides in the endomembrane system. It is found in the cytoplasm. Its subcellular location is the cytoskeleton. The enzyme catalyses N-(5Z,8Z,11Z,14Z-eicosatetraenoyl)-ethanolamine + H2O = ethanolamine + (5Z,8Z,11Z,14Z)-eicosatetraenoate. The catalysed reaction is (9Z)-octadecenamide + H2O = (9Z)-octadecenoate + NH4(+). It catalyses the reaction 2-(5Z,8Z,11Z,14Z-eicosatetraenoyl)-glycerol + H2O = glycerol + (5Z,8Z,11Z,14Z)-eicosatetraenoate + H(+). It carries out the reaction N-(9Z-octadecenoyl) ethanolamine + H2O = ethanolamine + (9Z)-octadecenoate. The enzyme catalyses N-hexadecanoylethanolamine + H2O = ethanolamine + hexadecanoate. The catalysed reaction is hexadecanamide + H2O = hexadecanoate + NH4(+). It catalyses the reaction tetradecamide + H2O = tetradecanoate + NH4(+). It carries out the reaction N-(9Z-octadecenoyl)-taurine + H2O = taurine + (9Z)-octadecenoate. The enzyme catalyses (9Z,12Z,15Z)-octadecatrienamide + H2O = (9Z,12Z,15Z)-octadecatrienoate + NH4(+). The catalysed reaction is (5Z,8Z,11Z,14Z)-eicosatetraenamide + H2O = (5Z,8Z,11Z,14Z)-eicosatetraenoate + NH4(+). It catalyses the reaction (6Z)-octadecenamide + H2O = (6Z)-octadecenoate + NH4(+). It carries out the reaction (15Z)-tetracosenamide + H2O = (15Z)-tetracosenoate + NH4(+). The enzyme catalyses (8Z,11Z,14Z)-eicosatrienamide + H2O = (8Z,11Z,14Z)-eicosatrienoate + NH4(+). The catalysed reaction is (11Z,14Z,17Z)-eicosatrienamide + H2O = (11Z,14Z,17Z)-eicosatrienoate + NH4(+). It catalyses the reaction (11Z,14Z)-eicosadienamide + H2O = (11Z,14Z)-eicosadienoate + NH4(+). It carries out the reaction (9Z,12Z)-octadecadienamide + H2O = (9Z,12Z)-octadecadienoate + NH4(+). The enzyme catalyses 1-O-methyl-(5Z,8Z,11Z,14Z)-eicosatetraenoate + H2O = methanol + (5Z,8Z,11Z,14Z)-eicosatetraenoate + H(+). The catalysed reaction is (11Z)-eicosenamide + H2O = (11Z)-eicosenoate + NH4(+). It catalyses the reaction N-(9Z-hexadecenoyl) ethanolamine + H2O = (9Z)-hexadecenoate + ethanolamine. It carries out the reaction N-octadecanoyl ethanolamine + H2O = octadecanoate + ethanolamine. The enzyme catalyses N-docosanoyl-ethanolamine + H2O = docosanoate + ethanolamine. The catalysed reaction is N-tetracosanoyl-taurine + H2O = tetracosanoate + taurine. It catalyses the reaction N-(15Z-tetracosenoyl)-ethanolamine + H2O = (15Z)-tetracosenoate + ethanolamine. It carries out the reaction N-docosanoyl-taurine + H2O = docosanoate + taurine. The enzyme catalyses N-(15Z-tetracosenoyl)-taurine + H2O = (15Z)-tetracosenoate + taurine. The catalysed reaction is N-tricosanoyl-taurine + H2O = tricosanoate + taurine. It catalyses the reaction (9Z)-octadecenoate + glycine = N-(9Z-octadecenoyl)glycine + H2O. It carries out the reaction N-(5Z,8Z,11Z,14Z)-eicosatetraenoyl-glycine + H2O = (5Z,8Z,11Z,14Z)-eicosatetraenoate + glycine. The enzyme catalyses N-(5Z,8Z,11Z,14Z-eicosatetraenoyl)-L-serine + H2O = (5Z,8Z,11Z,14Z)-eicosatetraenoate + L-serine. With respect to regulation, inhibited by O-aryl carbamates and alpha-keto heterocycles. Inhibited by trifluoromethyl ketone. Functionally, catalyzes the hydrolysis of endogenous amidated lipids like the sleep-inducing lipid oleamide ((9Z)-octadecenamide), the endocannabinoid anandamide (N-(5Z,8Z,11Z,14Z-eicosatetraenoyl)-ethanolamine), as well as other fatty amides, to their corresponding fatty acids, thereby regulating the signaling functions of these molecules. Hydrolyzes polyunsaturated substrate anandamide preferentially as compared to monounsaturated substrates. It can also catalyze the hydrolysis of the endocannabinoid 2-arachidonoylglycerol (2-(5Z,8Z,11Z,14Z-eicosatetraenoyl)-glycerol). FAAH cooperates with PM20D1 in the hydrolysis of amino acid-conjugated fatty acids such as N-fatty acyl glycine and N-fatty acyl-L-serine, thereby acting as a physiological regulator of specific subsets of intracellular, but not of extracellular, N-fatty acyl amino acids. This chain is Fatty-acid amide hydrolase 1 (FAAH), found in Homo sapiens (Human).